The sequence spans 730 residues: Protein folded gastrulation (730 aa).

The N-terminal stretch at 1 to 21 (MSPPNCLLAVLALTVFIGANN) is a signal peptide. N-linked (GlcNAc...) asparagine glycans are attached at residues asparagine 51 and asparagine 193. Low complexity predominate over residues 197 to 211 (TPETSTSITPTSTTT). Residues 197-222 (TPETSTSITPTSTTTFAVPSVPSGEA) form a disordered region. N-linked (GlcNAc...) asparagine glycosylation is found at asparagine 252 and asparagine 289. Over residues 361–385 (ELEEEVGEEEVTATDILPSEEDEYT) the composition is skewed to acidic residues. The tract at residues 361 to 424 (ELEEEVGEEE…SPHPPEEPEI (64 aa)) is disordered. Low complexity predominate over residues 386 to 415 (TETATTTGDTTVAEASMDTSTATSTSGQSS). N-linked (GlcNAc...) asparagine glycosylation occurs at asparagine 459. 2 disordered regions span residues 474-526 (EDES…GGHK) and 545-583 (KGKQRQQHQPQKQQLEPTSTEITSALTSTSTEDATTTTT). A compositionally biased stretch (low complexity) spans 478–491 (STTTATPEPSSSTP). The span at 504 to 513 (DNDNLMTNTI) shows a compositional bias: polar residues. The segment covering 567-583 (TSALTSTSTEDATTTTT) has biased composition (low complexity). Asparagine 590 and asparagine 639 each carry an N-linked (GlcNAc...) asparagine glycan. Over residues 663–676 (SAASTESAGTAATT) the composition is skewed to low complexity. The segment at 663 to 683 (SAASTESAGTAATTPNSSSNP) is disordered. N-linked (GlcNAc...) asparagine glycosylation occurs at asparagine 678.

Post-translationally, may be highly O-glycosylated in its Ser/Thr-rich C-terminal part. As to expression, expressed in the invagination primordia in a pattern that precisely precedes the pattern of constrictions.

The protein localises to the secreted. Its subcellular location is the extracellular space. It is found in the extracellular matrix. Functionally, coordinates cell shape changes during formation of the ventral furrow and invagination of the posterior midgut primordium, by inducing apical constriction of cells in spatially and temporally defined manners. Could function as a secreted signal to initiate apical constriction by acting as a ligand for an unidentified G protein-coupled receptor, which in turn activates the G protein alpha subunit encoded by concertina, in neighboring cells. Such an intracellular pathway would ultimately induce contraction of the apical actin-myosin network. In the ventral furrow, fog appears to ensure that all the cells initiate constriction within several minutes of each other. In the posterior midgut invagination, fog appears to direct the ordered progression of constriction initiations out from a central region and also to delimit the peripheral extent of this spreading. The polypeptide is Protein folded gastrulation (fog) (Drosophila melanogaster (Fruit fly)).